The sequence spans 317 residues: Melanocyte-stimulating hormone receptor (317 aa).

Over 1–37 (MPMHGAQRKLLGSLNSTPTATSNLGLAANHTGAPCLE) the chain is Extracellular. An N-linked (GlcNAc...) asparagine glycan is attached at asparagine 29. Residues 38-63 (VSIPDGLFLSLGLVSLVENVLVVAAI) form a helical membrane-spanning segment. Residues 64–72 (AKNRNLHSS) are Cytoplasmic-facing. A helical transmembrane segment spans residues 73 to 93 (MYCFICCLALSDLLVSGSNML). At 94–118 (ETAVILLLEAGALATRTSAMQQLHN) the chain is on the extracellular side. The helical transmembrane segment at 119–140 (TIDVLTCSSMLCSLCFLGAIAV) threads the bilayer. Over 141–163 (DRYISIFYALRYHSIMTLPRAQR) the chain is Cytoplasmic. A helical membrane pass occupies residues 164 to 183 (AIAAIWVASXLSSTLFITYY). At 184-191 (DHAAVLLC) the chain is on the extracellular side. A helical transmembrane segment spans residues 192–211 (LVVFFLAMLVLMAVLYVHML). Topologically, residues 212-240 (ARACQHAHGIIRLHKRQTPAHQGFGLRGA) are cytoplasmic. A helical transmembrane segment spans residues 241 to 266 (ATLTILLGIFFLCWGPFFLHLTLVVF). Residues 267–279 (CPQHLTCSCIFKN) lie on the Extracellular side of the membrane. A helical membrane pass occupies residues 280–300 (FKVFLTLIICNTIIDPLIYAF). The Cytoplasmic portion of the chain corresponds to 301–317 (RSQELRRTLKEVLLCSW). The S-palmitoyl cysteine moiety is linked to residue cysteine 315.

It belongs to the G-protein coupled receptor 1 family. In terms of assembly, interacts with MGRN1, but does not undergo MGRN1-mediated ubiquitination; this interaction competes with GNAS-binding and thus inhibits agonist-induced cAMP production. Interacts with OPN3; the interaction results in a decrease in MC1R-mediated cAMP signaling and ultimately a decrease in melanin production in melanocytes.

It is found in the cell membrane. Receptor for MSH (alpha, beta and gamma) and ACTH. The activity of this receptor is mediated by G proteins which activate adenylate cyclase. Mediates melanogenesis, the production of eumelanin (black/brown) and phaeomelanin (red/yellow), via regulation of cAMP signaling in melanocytes. This chain is Melanocyte-stimulating hormone receptor (MC1R), found in Saguinus midas (Golden-handed tamarin).